Here is a 145-residue protein sequence, read N- to C-terminus: D-aminoacyl-tRNA deacylase (145 aa).

A Gly-cisPro motif, important for rejection of L-amino acids motif is present at residues 137–138 (GP).

The protein belongs to the DTD family. Homodimer.

The protein resides in the cytoplasm. The enzyme catalyses glycyl-tRNA(Ala) + H2O = tRNA(Ala) + glycine + H(+). It carries out the reaction a D-aminoacyl-tRNA + H2O = a tRNA + a D-alpha-amino acid + H(+). An aminoacyl-tRNA editing enzyme that deacylates mischarged D-aminoacyl-tRNAs. Also deacylates mischarged glycyl-tRNA(Ala), protecting cells against glycine mischarging by AlaRS. Acts via tRNA-based rather than protein-based catalysis; rejects L-amino acids rather than detecting D-amino acids in the active site. By recycling D-aminoacyl-tRNA to D-amino acids and free tRNA molecules, this enzyme counteracts the toxicity associated with the formation of D-aminoacyl-tRNA entities in vivo and helps enforce protein L-homochirality. The sequence is that of D-aminoacyl-tRNA deacylase from Salmonella typhi.